The following is a 191-amino-acid chain: Fe/S biogenesis protein NfuA (191 aa).

Positions 149 and 152 each coordinate [4Fe-4S] cluster.

The protein belongs to the NfuA family. In terms of assembly, homodimer. Requires [4Fe-4S] cluster as cofactor.

Functionally, involved in iron-sulfur cluster biogenesis. Binds a 4Fe-4S cluster, can transfer this cluster to apoproteins, and thereby intervenes in the maturation of Fe/S proteins. Could also act as a scaffold/chaperone for damaged Fe/S proteins. In Yersinia pseudotuberculosis serotype O:1b (strain IP 31758), this protein is Fe/S biogenesis protein NfuA.